The following is a 388-amino-acid chain: Serine/threonine-protein phosphatase sitA (388 aa).

Residues Asp67 and His69 each coordinate Mn(2+). Residues 86 to 146 (PDGSEAEAPK…SQRDRSSSSG (61 aa)) are disordered. Mn(2+)-binding residues include Asp161 and Asn193. Catalysis depends on His194, which acts as the Proton donor. His243 and His317 together coordinate Mn(2+).

The protein belongs to the PPP phosphatase family. PP-6 (PP-V) subfamily. Mn(2+) serves as cofactor.

The catalysed reaction is O-phospho-L-threonyl-[protein] + H2O = L-threonyl-[protein] + phosphate. Protein phosphatase that acts as a modulator of pkcA/mpkA activity involved in the cell wall integrity pathway. Plays an important role in regulation of adhesion, cell wall integrity, biofilm formation, and virulence. The polypeptide is Serine/threonine-protein phosphatase sitA (Aspergillus fumigatus (strain ATCC MYA-4609 / CBS 101355 / FGSC A1100 / Af293) (Neosartorya fumigata)).